A 428-amino-acid chain; its full sequence is Patatin-like protein 3 (428 aa).

Residues 38–252 enclose the PNPLA domain; that stretch reads LSIDGGGIRG…AANNPTLCAI (215 aa). Residues 42-47 carry the GXGXXG motif; sequence GGGIRG. The GXSXG motif lies at 80-84; it reads GTSTG. Serine 82 (nucleophile) is an active-site residue. The active-site Proton acceptor is the aspartate 239. Positions 239-241 match the DGA/G motif; that stretch reads DGG. At serine 423 the chain carries Phosphoserine.

It belongs to the patatin family. As to expression, expressed specifically in the stigma, ovary and funiculus of the ovary.

The protein localises to the cytoplasm. Its function is as follows. Possesses non-specific lipolytic acyl hydrolase (LAH) activity. Catalyzes the hydrolysis of the neutral lipids monogalactosyldiacylglycerol (MGDG), digalactosyldiacylglycerol (DGDG) and phosphatidylglycerol (PG), and less efficiently the polar lipids phosphatidylcholine (PC) and phosphatidylinositol (PI), but not the storage lipid triacylglycerol (TAG). May play a role in root development. The sequence is that of Patatin-like protein 3 (PLP3) from Arabidopsis thaliana (Mouse-ear cress).